Consider the following 545-residue polypeptide: Glucose-6-phosphate isomerase (545 aa).

Glu-351 serves as the catalytic Proton donor. Active-site residues include His-382 and Lys-510.

It belongs to the GPI family.

It is found in the cytoplasm. The enzyme catalyses alpha-D-glucose 6-phosphate = beta-D-fructose 6-phosphate. The protein operates within carbohydrate biosynthesis; gluconeogenesis. It participates in carbohydrate degradation; glycolysis; D-glyceraldehyde 3-phosphate and glycerone phosphate from D-glucose: step 2/4. Catalyzes the reversible isomerization of glucose-6-phosphate to fructose-6-phosphate. In Shewanella loihica (strain ATCC BAA-1088 / PV-4), this protein is Glucose-6-phosphate isomerase.